The primary structure comprises 177 residues: Large ribosomal subunit protein uL6 (177 aa).

Lys44 carries the N6-acetyllysine modification.

Belongs to the universal ribosomal protein uL6 family. In terms of assembly, part of the 50S ribosomal subunit.

In terms of biological role, this protein binds to the 23S rRNA, and is important in its secondary structure. It is located near the subunit interface in the base of the L7/L12 stalk, and near the tRNA binding site of the peptidyltransferase center. This is Large ribosomal subunit protein uL6 from Shigella sonnei (strain Ss046).